Consider the following 908-residue polypeptide: Glutamate receptor ionotropic, kainate 2 (908 aa).

The N-terminal stretch at 1-31 (MKIISPVLSNLVFSRSIKVLLCLLWIGYSQG) is a signal peptide. Over 32-561 (TTHVLRFGGI…VFSFLNPLSP (530 aa)) the chain is Extracellular. 7 N-linked (GlcNAc...) asparagine glycosylation sites follow: asparagine 67, asparagine 73, asparagine 275, asparagine 378, asparagine 412, asparagine 423, and asparagine 430. A disulfide bond links cysteine 96 and cysteine 347. Residues proline 516, alanine 518, and arginine 523 each coordinate L-glutamate. N-linked (GlcNAc...) asparagine glycosylation occurs at asparagine 546. The chain crosses the membrane as a helical span at residues 562 to 582 (DIWMYILLAYLGVSCVLFVIA). Residues 583–638 (RFSPYEWYNPHPCNPDSDVVENNFTLLNSFWFGVGALMQQGSELMPKALSTRIVGG) lie on the Cytoplasmic side of the membrane. The chain crosses the membrane as a helical span at residues 639-659 (IWWFFTLIIISSYTANLAAFL). The Extracellular portion of the chain corresponds to 660–819 (TVERMESPID…KEASALGVQN (160 aa)). 3 residues coordinate L-glutamate: alanine 689, threonine 690, and glutamate 738. Residues cysteine 750 and cysteine 804 are joined by a disulfide bond. N-linked (GlcNAc...) asparagine glycosylation occurs at asparagine 751. A helical transmembrane segment spans residues 820 to 840 (IGGIFIVLAAGLVLSVFVAVG). Residues 841 to 908 (EFLYKSKKNA…RRLPGKETMA (68 aa)) are Cytoplasmic-facing. 2 positions are modified to phosphoserine; by PKC: serine 846 and serine 868. Lysine 886 participates in a covalent cross-link: Glycyl lysine isopeptide (Lys-Gly) (interchain with G-Cter in SUMO1).

The protein belongs to the glutamate-gated ion channel (TC 1.A.10.1) family. GRIK2 subfamily. In terms of assembly, homotetramer and heterotetramer with GRIK5. Tetramers may be formed by the dimerization of dimers. Assembles into a kainate-gated homomeric channel that does not bind AMPA. Can form functional heteromeric receptors with GRIK3. Forms a heteromeric complex with GRIK4 and GRIK5. Interacts with DLG4. Interacts (via C-terminus) with KLHL17 (via kelch repeats); the interaction targets GRIK2 for degradation via ubiquitin-proteasome pathway. Interacts with NETO2. Sumoylation mediates kainate receptor-mediated endocytosis and regulates synaptic transmission. Sumoylation is enhanced by PIAS3 and desumoylated by SENP1. Post-translationally, ubiquitinated. Ubiquitination regulates the GRIK2 levels at the synapse by leading kainate receptor degradation through proteasome. In terms of processing, phosphorylated by PKC at Ser-868 upon agonist activation, this directly enhance sumoylation. In terms of tissue distribution, expressed in the hippocampal mossy fiber synapses (at protein level). Most abundant in the cerebellum and the hypothalamus. Expressed in a proportion of dorsal root ganglion (DRG) neurons (13.6%); predominantly small diameter DRG neurons (75%) with the remainder expressed in medium diameter DRG neurons.

Its subcellular location is the cell membrane. The protein localises to the postsynaptic cell membrane. It catalyses the reaction Ca(2+)(in) = Ca(2+)(out). The enzyme catalyses Na(+)(in) = Na(+)(out). Cold receptor activity activated by temperatures between 10-19 degrees Celsius. Its function is as follows. Ionotropic glutamate receptor that functions as a cation-permeable ligand-gated ion channel, gated by L-glutamate and the glutamatergic agonist kainic acid. L-glutamate acts as an excitatory neurotransmitter at many synapses in the central nervous system. Binding of the excitatory neurotransmitter L-glutamate induces a conformation change, leading to the opening of the cation channel, and thereby converts the chemical signal to an electrical impulse. The receptor then desensitizes rapidly and enters a transient inactive state, characterized by the presence of bound agonist. Modulates cell surface expression of NETO2. In association with GRIK3, involved in presynaptic facilitation of glutamate release at hippocampal mossy fiber synapses. Functionally, independent of its ionotropic glutamate receptor activity, acts as a thermoreceptor conferring sensitivity to cold temperatures. Functions in dorsal root ganglion neurons. Ionotropic glutamate receptor that functions as a cation-permeable ligand-gated ion channel, gated by L-glutamate and the glutamatergic agonist kainic acid. The polypeptide is Glutamate receptor ionotropic, kainate 2 (Grik2) (Mus musculus (Mouse)).